A 628-amino-acid polypeptide reads, in one-letter code: MTDNNHEHKQPLPSLAIAAIGVVFGDIGTSPLYSLKEAFSPSHGIPLTDQSILGVISLLFWAIVIVVGVKYVLFVMRADNNGEGGVLALMALALRSLDEKSKMAGLLMMLGIFGACMFYGDAVITPAISVISAVEGLEIAAPHLSHLVLPLTIVILILLFWIQRHGTAMVGRLFGPIMVLWFVVLAALGLWHILQSPSVIRALNPCYAYTFMAAHVLQAYVVLGSVVLVLTGAEALYADMGHFGAKPIRMAWYVLVMPSLVLNYFGQGALLMHDPKAIENPFFLLAPDWALLPLVVLSTIATVIASQAVISGAYSLTSQAIQLGYVPRMKILHTSELAIGQIYVPVVNWMLLFIILCIVIAFKSSDNLAAAYGIAVTATMVITTILACVVMVKVWNWNKLLVALIIGVFMTVDLGFFGANLLKVEEGGWLPLGIGALLFFLLMTWYKGRMIVKERTAADGIPLMPFLQGLLAHPPHRVSGTAIYLTGSDSLVPVSLLHNLKHNKVLHERTIFLTFVTRDIPYVNDADRVTVKDIDGGLYLVKAAYGFNETPDVKAVLLEVGRTHDMTFELMDTSFFLARETVVPTQLPGMSVWRERVFAWMHQNAAKPTDFFSIPANRVVELGTKIEI.

12 helical membrane passes run 15–35, 55–75, 104–124, 142–162, 173–193, 210–230, 252–272, 281–301, 342–362, 372–392, 400–420, and 426–446; these read LAIA…LYSL, VISL…VLFV, AGLL…DAVI, PHLS…LFWI, LFGP…LWHI, TFMA…VLVL, WYVL…ALLM, PFFL…STIA, IYVP…VIAF, YGIA…VVMV, LLVA…FGAN, and EGGW…MTWY.

It belongs to the HAK/KUP transporter (TC 2.A.72) family.

Its subcellular location is the cell inner membrane. The enzyme catalyses K(+)(in) + H(+)(in) = K(+)(out) + H(+)(out). In terms of biological role, transport of potassium into the cell. Likely operates as a K(+):H(+) symporter. The polypeptide is Probable potassium transport system protein Kup (Paraburkholderia xenovorans (strain LB400)).